A 373-amino-acid chain; its full sequence is MASYGFPLTASSLVDWTSLTFSPIEVNGHIQCTYSPEVAEWGAPHFVKDPYLRVHGLAPALNYGQQIFEGMKAFRTPTGSIRLFRPKMNAVRFAHSASFVAIPPVPEALFLRAVHLAVGLNSEFVPPYDSRGSALYIRPIAFASSATANLAPADHFTFCVFVMPVAPLSTGAGQGLRALVVEDVDRAAPKGTGSAKVGGNYAPIVTTMQRAKADGYGLTLHLDSATHTMVDEFSASGFIGVRVDAGKTTMVVPDSPTILRSITVDSMCRIAESFGWQVQRRAVSFTELAELSEAFAVGTAFILTPVRAITRPCTHTCIEYTADYRSSASAYTRLLETLQGIQQGWLDDAWGWTEEVQDPSSDEFITDTVQARR.

Arg-92 is a pyridoxal 5'-phosphate binding site. The residue at position 196 (Lys-196) is an N6-(pyridoxal phosphate)lysine. Pyridoxal 5'-phosphate is bound at residue Glu-232.

This sequence belongs to the class-IV pyridoxal-phosphate-dependent aminotransferase family. The cofactor is pyridoxal 5'-phosphate.

The protein operates within mycotoxin biosynthesis. Transaminase; part of the gene clusters that mediate the biosynthesis of AM-toxins, host-selective toxins (HSTs) causing Alternaria blotch on apple, a worldwide distributed disease. AM-toxins are cyclic depsipeptides containing the 3 residues 2-hydroxy-isovaleric acid (2-HIV), dehydroalanine, L-alanine which are common for all 3 AM-toxins I to III. The fourth precursor is L-alpha-amino-methoxyphenyl-valeric acid (L-Amv) for AM-toxin I, L-alpha-amino-phenyl-valeric acid (L-Apv) for AM-toxin II, and L-alpha-amino-hydroxyphenyl-valeric acid (L-Ahv) for AM-toxin III. AM-toxins have two target sites for affecting susceptible apple cells; they cause invagination of the plasma membrane and electrolyte loss and chloroplast disorganization. The non-ribosomal peptide synthetase AMT1 contains 4 catalytic modules and is responsible for activation of each residue in AM-toxin. The aldo-keto reductase AMT2 catalyzes the conversion of 2-keto-isovaleric acid (2-KIV) to 2-hydroxy-isovaleric acid (2-HIV), one of the precursor residues incorporated by AMT1 during AM-toxin biosynthesis, by reduction of its ketone to an alcohol. The cytochrome P450 monooxygenase AMT3 and the thioesterase AMT4 are also important for AM-toxin production, but their exact function within the AM-toxin biosynthesis are not known yet. Up to 21 proteins (including AMT1 to AMT4) are predicted to be involved in AM-toxin biosynthesis since their expression ishighly up-regulated in AM-toxin-producing cultures. This chain is Transaminase AMT5-2, found in Alternaria alternata (Alternaria rot fungus).